The sequence spans 253 residues: Imidazole glycerol phosphate synthase subunit HisF (253 aa).

Catalysis depends on residues Asp-11 and Asp-130.

This sequence belongs to the HisA/HisF family. As to quaternary structure, heterodimer of HisH and HisF.

The protein localises to the cytoplasm. It catalyses the reaction 5-[(5-phospho-1-deoxy-D-ribulos-1-ylimino)methylamino]-1-(5-phospho-beta-D-ribosyl)imidazole-4-carboxamide + L-glutamine = D-erythro-1-(imidazol-4-yl)glycerol 3-phosphate + 5-amino-1-(5-phospho-beta-D-ribosyl)imidazole-4-carboxamide + L-glutamate + H(+). Its pathway is amino-acid biosynthesis; L-histidine biosynthesis; L-histidine from 5-phospho-alpha-D-ribose 1-diphosphate: step 5/9. In terms of biological role, IGPS catalyzes the conversion of PRFAR and glutamine to IGP, AICAR and glutamate. The HisF subunit catalyzes the cyclization activity that produces IGP and AICAR from PRFAR using the ammonia provided by the HisH subunit. The protein is Imidazole glycerol phosphate synthase subunit HisF of Lysinibacillus sphaericus (strain C3-41).